A 103-amino-acid polypeptide reads, in one-letter code: Large ribosomal subunit protein bL21 (103 aa).

The protein belongs to the bacterial ribosomal protein bL21 family. As to quaternary structure, part of the 50S ribosomal subunit. Contacts protein L20.

This protein binds to 23S rRNA in the presence of protein L20. The sequence is that of Large ribosomal subunit protein bL21 from Bordetella petrii (strain ATCC BAA-461 / DSM 12804 / CCUG 43448).